The chain runs to 229 residues: Calcyclin-binding protein (229 aa).

Ala-2 is modified (N-acetylalanine). An interaction with SIAH1 region spans residues 2 to 81; that stretch reads ASALEELQKD…YTVKISNYGW (80 aa). Phosphoserine is present on Ser-3. An N6-acetyllysine mark is found at Lys-10 and Lys-21. Residue Ser-36 is modified to Phosphoserine. The tract at residues 38–59 is disordered; that stretch reads IETELRNKMQQKSQKKPEFDNE. In terms of domain architecture, CS spans 74 to 168; the sequence is VKISNYGWDQ…AENTRWDYLT (95 aa). Positions 74–229 are interaction with SKP1; the sequence is VKISNYGWDQ…EKQAREDTEF (156 aa). An N6-acetyllysine mark is found at Lys-86 and Lys-119. The segment at 155–229 is interaction with S100A6; sequence CRKKAENTRW…EKQAREDTEF (75 aa). Positions 169-229 constitute an SGS domain; the sequence is QVEKECKEKE…EKQAREDTEF (61 aa).

As to quaternary structure, component of some large E3 complex at least composed of UBE2D1, SIAH1, CACYBP/SIP, SKP1, APC and TBL1X. Interacts directly with SIAH1, SIAH2 and SKP1. Interacts with protein of the S100 family S100A1, S100A6, S100B, S100P and S100A12 in a calcium-dependent manner. In terms of processing, phosphorylated on serine residues. Phosphorylated upon induction by RA or at high calcium concentrations.

The protein resides in the nucleus. It is found in the cytoplasm. May be involved in calcium-dependent ubiquitination and subsequent proteasomal degradation of target proteins. Probably serves as a molecular bridge in ubiquitin E3 complexes. Participates in the ubiquitin-mediated degradation of beta-catenin (CTNNB1). This Rattus norvegicus (Rat) protein is Calcyclin-binding protein (Cacybp).